The sequence spans 224 residues: Large ribosomal subunit protein bL25 (224 aa).

A disordered region spans residues 190–224; sequence EPAPAAEGAAPAEGAAAAAAGGKPAAKTAKPAAKK.

The protein belongs to the bacterial ribosomal protein bL25 family. CTC subfamily. As to quaternary structure, part of the 50S ribosomal subunit; part of the 5S rRNA/L5/L18/L25 subcomplex. Contacts the 5S rRNA. Binds to the 5S rRNA independently of L5 and L18.

Functionally, this is one of the proteins that binds to the 5S RNA in the ribosome where it forms part of the central protuberance. The chain is Large ribosomal subunit protein bL25 from Variovorax paradoxus (strain S110).